We begin with the raw amino-acid sequence, 86 residues long: U18-theraphotoxin-Cg1a (86 aa).

The first 20 residues, 1 to 20 (KASVLITLAVLGVMFVWTSA), serve as a signal peptide directing secretion. Residues 21–49 (AELEERGSDQRDSPALIKSMAKVFQSEER) constitute a propeptide that is removed on maturation. 3 disulfides stabilise this stretch: C51–C65, C58–C70, and C64–C78. F84 is subject to Phenylalanine amide.

This sequence belongs to the neurotoxin 10 (Hwtx-1) family. 47 subfamily. As to expression, expressed by the venom gland.

It is found in the secreted. In terms of biological role, inhibits TTX-sensitive and TTX-insensitive sodium currents (IC(50) is 0.6 uM and 0.95 uM respectively) on rat dorsal root ganglion (DRG) neurons. Inhibits muscular subtypes sodium channels Nav1.4/SCN4A and Nav1.5/SCN5A transiently transfected in to HEK293 cells (IC(50) is 5.42 uM and 0.45 uM respectively). Also blocks Kv2.1/KCNB1 potassium channels expressed in X.laevis oocytes with an IC(50) of 604 nM. Injection of the toxin in mice was immediately followed by general ataxia, lack of response to stimuli and semiparalysis. The polypeptide is U18-theraphotoxin-Cg1a (Chilobrachys guangxiensis (Chinese earth tiger tarantula)).